A 95-amino-acid chain; its full sequence is MANTKSAIKRIKTIERNRIRNCAYKSVVKTFIKKYLKVLSDYTNAPNSNGVENIQTTLGIVYTKIDKAVKRGVYHSNKAARMKSKLALKYNVIKK.

Belongs to the bacterial ribosomal protein bS20 family.

The protein resides in the plastid. Its subcellular location is the cyanelle. In terms of biological role, binds directly to 16S ribosomal RNA. The chain is Small ribosomal subunit protein bS20c (rps20) from Cyanophora paradoxa.